The sequence spans 235 residues: tRNA (guanine-N(1)-)-methyltransferase (235 aa).

Residues glycine 113 and 133–138 (IGDYIL) contribute to the S-adenosyl-L-methionine site.

It belongs to the RNA methyltransferase TrmD family. As to quaternary structure, homodimer.

The protein localises to the cytoplasm. It carries out the reaction guanosine(37) in tRNA + S-adenosyl-L-methionine = N(1)-methylguanosine(37) in tRNA + S-adenosyl-L-homocysteine + H(+). Its function is as follows. Specifically methylates guanosine-37 in various tRNAs. The polypeptide is tRNA (guanine-N(1)-)-methyltransferase (Wolbachia sp. subsp. Brugia malayi (strain TRS)).